A 432-amino-acid chain; its full sequence is Trigger factor (432 aa).

Residues 163–248 (GDVVVLDFAA…VHAVKERRLP (86 aa)) enclose the PPIase FKBP-type domain.

Belongs to the FKBP-type PPIase family. Tig subfamily.

The protein resides in the cytoplasm. It carries out the reaction [protein]-peptidylproline (omega=180) = [protein]-peptidylproline (omega=0). Functionally, involved in protein export. Acts as a chaperone by maintaining the newly synthesized protein in an open conformation. Functions as a peptidyl-prolyl cis-trans isomerase. The chain is Trigger factor from Nitratidesulfovibrio vulgaris (strain DSM 19637 / Miyazaki F) (Desulfovibrio vulgaris).